The following is a 350-amino-acid chain: Decarboxylase iboD (350 aa).

It belongs to the phosphatidylserine decarboxylase family.

It participates in secondary metabolite biosynthesis. Functionally, decarboxylase; part of the gene cluster that mediates the biosynthesis of the psychoactive metabolites ibotenic acid and muscimol. The first committed step is glutamate hydroxylation by the 2-oxoglutarate-dependent dioxygenase iboH, and the last step is decarboxylation of ibotenic acid to muscimol by the decarboxylase iboD. The order of the intermediate reactions is somewhat ambiguous. IboA likely activates the carboxylic acid at position 5 to introduce an amide bond, and the flavin monooxygenase iboF generates the N-O bond. There are several options for the latter step. One option is that iboF directly hydroxylates the amide nitrogen formed by iboA to produce a hydroxamic acid species. Another option is that iboF hydroxylates an external N-containing compound, whose resulting N-O bond is subsequently introduced into the hydroxyglutamate scaffold. The paralogous PLP-dependent cystathionine gamma-synthase-like enzymes iboG1 and iboG2 are likely involved in substitution of the OH group at position 3 by the O-N moiety. The first cyclic intermediate is most probably tricholomic acid which is likely desaturated to ibotenic acid by the cytochrome P450 monooxygenase iboC. This Amanita muscaria (strain Koide BX008) protein is Decarboxylase iboD.